A 277-amino-acid polypeptide reads, in one-letter code: Ubiquitin-conjugating enzyme suppressor 1 (277 aa).

The interval 254 to 277 (RTLACPDETNDNRGSEHYTKRKKI) is disordered.

Not known; its elevated expression suppresses the conditional cell cycle defects associated with UBC3/CDC34 mutations. This is Ubiquitin-conjugating enzyme suppressor 1 (UBS1) from Saccharomyces cerevisiae (strain ATCC 204508 / S288c) (Baker's yeast).